The sequence spans 408 residues: Peptidase T (408 aa).

Position 78 (histidine 78) interacts with Zn(2+). Residue aspartate 80 is part of the active site. Aspartate 140 serves as a coordination point for Zn(2+). Residue glutamate 173 is the Proton acceptor of the active site. Residues glutamate 174, aspartate 196, and histidine 379 each contribute to the Zn(2+) site.

The protein belongs to the peptidase M20B family. Zn(2+) serves as cofactor.

It localises to the cytoplasm. The catalysed reaction is Release of the N-terminal residue from a tripeptide.. Functionally, cleaves the N-terminal amino acid of tripeptides. The polypeptide is Peptidase T (Escherichia coli (strain K12 / MC4100 / BW2952)).